Reading from the N-terminus, the 360-residue chain is C-X-C chemokine receptor type 2 (360 aa).

Over M1 to K48 the chain is Extracellular. A glycan (N-linked (GlcNAc...) asparagine) is linked at N22. A helical membrane pass occupies residues Y49–Y75. The Cytoplasmic segment spans residues S76 to D84. Residues V85 to A105 form a helical membrane-spanning segment. At A106–K120 the chain is on the extracellular side. C119 and C196 are oxidised to a cystine. Residues V121–V142 form a helical membrane-spanning segment. Residues D143–K163 are Cytoplasmic-facing. Residues F164 to F183 traverse the membrane as a helical segment. The Extracellular segment spans residues R184 to R208. The helical transmembrane segment at M209 to Y231 threads the bilayer. Over G232–R251 the chain is Cytoplasmic. A helical membrane pass occupies residues V252–A273. Residues D274–R294 lie on the Extracellular side of the membrane. Residues A295–A315 traverse the membrane as a helical segment. Residues F316–L360 are Cytoplasmic-facing. A phosphoserine mark is found at S347, S351, S352, and S353.

This sequence belongs to the G-protein coupled receptor 1 family. Interacts with IL8. Interacts with GNAI2. Post-translationally, phosphorylated upon ligand binding; which is required for desensitization. In terms of processing, (Microbial infection) Proteolytically cleaved by Staphylococcus aureus staphopain A/SspP. This cleavage inhibits CXCR2-dependent neutrophil activation and chemotaxis.

The protein resides in the cell membrane. Receptor for interleukin-8 which is a powerful neutrophil chemotactic factor. Binding of IL-8 to the receptor causes activation of neutrophils. This response is mediated via a G-protein that activates a phosphatidylinositol-calcium second messenger system. Binds to IL-8 with high affinity. Also binds with high affinity to CXCL3, GRO/MGSA and NAP-2. This is C-X-C chemokine receptor type 2 (CXCR2) from Homo sapiens (Human).